A 662-amino-acid chain; its full sequence is UvrABC system protein B (662 aa).

The Helicase ATP-binding domain occupies aspartate 31–arginine 188. Residue glycine 44–threonine 51 participates in ATP binding. Residues tyrosine 97–valine 120 carry the Beta-hairpin motif. Residues glutamine 435–isoleucine 601 enclose the Helicase C-terminal domain. The UVR domain occupies lysine 626–leucine 661.

Belongs to the UvrB family. Forms a heterotetramer with UvrA during the search for lesions. Interacts with UvrC in an incision complex.

Its subcellular location is the cytoplasm. Functionally, the UvrABC repair system catalyzes the recognition and processing of DNA lesions. A damage recognition complex composed of 2 UvrA and 2 UvrB subunits scans DNA for abnormalities. Upon binding of the UvrA(2)B(2) complex to a putative damaged site, the DNA wraps around one UvrB monomer. DNA wrap is dependent on ATP binding by UvrB and probably causes local melting of the DNA helix, facilitating insertion of UvrB beta-hairpin between the DNA strands. Then UvrB probes one DNA strand for the presence of a lesion. If a lesion is found the UvrA subunits dissociate and the UvrB-DNA preincision complex is formed. This complex is subsequently bound by UvrC and the second UvrB is released. If no lesion is found, the DNA wraps around the other UvrB subunit that will check the other stand for damage. The polypeptide is UvrABC system protein B (Streptococcus pneumoniae (strain Hungary19A-6)).